The sequence spans 154 residues: Putative thioredoxin H10 (154 aa).

The Thioredoxin domain maps to 24–148; that stretch reads NNNNSYGQTR…LQKKTAAAAD (125 aa). Residues Cys74 and Cys77 each act as nucleophile in the active site. Cys74 and Cys77 form a disulfide bridge.

This sequence belongs to the thioredoxin family.

The protein localises to the cytoplasm. Its function is as follows. Probable thiol-disulfide oxidoreductase that may be involved in the redox regulation of a number of cytosolic enzymes. The sequence is that of Putative thioredoxin H10 from Arabidopsis thaliana (Mouse-ear cress).